The sequence spans 545 residues: Tyrosine decarboxylase 2 (545 aa).

Residues Gly-23–Asn-44 show a composition bias toward gly residues. Residues Gly-23 to Gly-45 form a disordered region. Residues His-245 and His-360 each coordinate L-tyrosine. Lys-361 is modified (N6-(pyridoxal phosphate)lysine). Tyr-390 contributes to the L-tyrosine binding site.

Belongs to the group II decarboxylase family. Homotetramer. It depends on pyridoxal 5'-phosphate as a cofactor. As to expression, expressed specifically in flowers.

The protein resides in the cytoplasm. It catalyses the reaction L-tyrosine + H(+) = tyramine + CO2. Functionally, converts tyrosine into tyramine, a precursor of isoquinoline alkaloids and various amides. The chain is Tyrosine decarboxylase 2 from Arabidopsis thaliana (Mouse-ear cress).